Here is an 81-residue protein sequence, read N- to C-terminus: Defensin-like protein 153 (81 aa).

Positions 1-26 are cleaved as a signal peptide; the sequence is MKNVSQVSVAVLLIFSILVLGIGVQG. Intrachain disulfides connect C30/C81, C41/C60, C46/C75, and C50/C77.

It belongs to the DEFL family.

It localises to the secreted. The sequence is that of Defensin-like protein 153 (LCR31) from Arabidopsis thaliana (Mouse-ear cress).